Consider the following 458-residue polypeptide: MNTSHKTLKTIAILGQPNVGKSSLFNRLARERIAITSDFAGTTRDINKRKIALNGHEVELLDTGGMAKDALLSKEIKALNLKAAQMSDLILYVVDGKSIPSDEDLKLFREVFKINPNCFLVINKIDNDKEKERAYAFSSFGMPKSFNISVSHNRGISALIDAVLSALDLNQIIEQDLDADILESLETPNNALEEEIIQVGIIGRVNVGKSSLLNALTKKERSLVSSVAGTTIDPIDETILIGDQKICFVDTAGIRHRGKILGIEKYALERTQKALEKSHIALLVLDVSAPFVELDEKISSLADKHSLGIILVLNKWDIRYAPYEEIIATLKRKFRFLEYAPVITTSCLKARHIDEIKHKIIEVYECFSKRIPTSLLNSVINQATQKHPLPSDGGKLVKVYYATQFATKPPQISLIMNRPKALHFSYKRYLINTLRKEFNFLGTPLILNAKDKKSAQQN.

2 EngA-type G domains span residues 9–171 and 197–368; these read KTIA…DLNQ and IQVG…ECFS. Residues 15-22, 62-66, 123-126, 203-210, 250-254, and 314-317 contribute to the GTP site; these read GQPNVGKS, DTGGM, NKID, GRVNVGKS, DTAGI, and NKWD. The KH-like domain maps to 369–453; sequence KRIPTSLLNS…PLILNAKDKK (85 aa).

Belongs to the TRAFAC class TrmE-Era-EngA-EngB-Septin-like GTPase superfamily. EngA (Der) GTPase family. In terms of assembly, associates with the 50S ribosomal subunit.

Its function is as follows. GTPase that plays an essential role in the late steps of ribosome biogenesis. This Helicobacter pylori (strain ATCC 700392 / 26695) (Campylobacter pylori) protein is GTPase Der.